Reading from the N-terminus, the 199-residue chain is mRNA export protein mlo3 (199 aa).

The segment at 1–41 is disordered; the sequence is MSMELDQSLDAIIASKPKGGIRKRRARSNKPKPTKNAKPAV. Residues 19–35 show a composition bias toward basic residues; the sequence is GGIRKRRARSNKPKPTK. One can recognise an RRM domain in the interval 55–134; the sequence is SKIIVSNLPT…RKMKVEIILD (80 aa). The interval 144–199 is disordered; it reads ARVSPASNASATASKNGAKSSKRKTTRRRRTPNRPKKSAEELDKEMDDYFGSNEKE. Polar residues predominate over residues 148-161; sequence PASNASATASKNGA. A compositionally biased stretch (basic residues) spans 163–179; it reads SSKRKTTRRRRTPNRPK.

Interacts with rpn15/dss1, mex67 and uap56.

The protein localises to the nucleus. In terms of biological role, has a role in the mRNA export process. Interferes with mitotic chromosome segregation when overexpressed. The polypeptide is mRNA export protein mlo3 (mlo3) (Schizosaccharomyces pombe (strain 972 / ATCC 24843) (Fission yeast)).